The sequence spans 102 residues: Small ribosomal subunit protein uS10 (102 aa).

It belongs to the universal ribosomal protein uS10 family. As to quaternary structure, part of the 30S ribosomal subunit.

In terms of biological role, involved in the binding of tRNA to the ribosomes. In Thermosipho melanesiensis (strain DSM 12029 / CIP 104789 / BI429), this protein is Small ribosomal subunit protein uS10.